The sequence spans 262 residues: Acyl-[acyl-carrier-protein]--UDP-N-acetylglucosamine O-acyltransferase (262 aa).

The protein belongs to the transferase hexapeptide repeat family. LpxA subfamily. Homotrimer.

It localises to the cytoplasm. It catalyses the reaction a (3R)-hydroxyacyl-[ACP] + UDP-N-acetyl-alpha-D-glucosamine = a UDP-3-O-[(3R)-3-hydroxyacyl]-N-acetyl-alpha-D-glucosamine + holo-[ACP]. Its pathway is glycolipid biosynthesis; lipid IV(A) biosynthesis; lipid IV(A) from (3R)-3-hydroxytetradecanoyl-[acyl-carrier-protein] and UDP-N-acetyl-alpha-D-glucosamine: step 1/6. Involved in the biosynthesis of lipid A, a phosphorylated glycolipid that anchors the lipopolysaccharide to the outer membrane of the cell. The chain is Acyl-[acyl-carrier-protein]--UDP-N-acetylglucosamine O-acyltransferase from Wigglesworthia glossinidia brevipalpis.